Reading from the N-terminus, the 1481-residue chain is MQRSPLEKASVVSKLFFSWTRPILKKGYRQRLELSDIYHISSSDSADNLSEKLEREWDRELASKKNPKLINALRRCFFWRFMFYGIILYLGEVTKAVQPLLLGRIIASYDPDNKVERSIAIYLGIGLCLLFIVRTLLLHPAIFGLHHIGMQMRIAMFSLIYKKTLKLSSRVLDKISIGQLVSLLSNNLNKFDEGLALAHFVWIAPLQVTLLMGLLWELLQAFTFCGLAFLVVLAFLQAGLGKMMMKYRDQRAGKINERLVITSEIIENIQSVKAYCWEEAMEKIIENLRQTELKLTRKAAYVRYLNSSAFFFSGFFVVFLSVLPYALLKGIILRKIFTTISFCIVLRMAVTRQFPWAVQTWYDSLGAINKIQDFLQKQEYKTLEYNLTTTDVVMENVTAYWEEGFSKLFEKAKENNNNRKISNGDNNLFFSNLLLGAPVLKDISFKIERGQLMAVAGSTGAGKTSLLMMIMGELEPSEGKIKHSGRISFCSQYSWIMPGTIKDNIIFGVSYDEYRYRSVIKACQLEEDISKFAEKDNIVLGEGGITLSGGQRARISLARAVYKDADLYLLDSPFGYLDVLTEKEIFESCVCKLMANKTRILVTSKMEHLKQADKILILHEGSIYFYGTFSELQNQRPDFSSKLMGCDTFDQFTAERRNSIITETLRRFSLEGDTSVSWNETKKPSFKQTGEFGEKRKNSILNSINSKRKFSVAQKTSLQMNGIEETSDEPLERKLSLVPHSEPGEGILPRSNAVNSGPTFLGGRRQSVLNLMTCSSVNQGQSIHRKTATSTRKMSLAPQASLAEIDIYSRRLSQDTGLEISEEINEEDLRDCFFDDVENIPAVTTWNTYLRYITVHKSLMFVLIWCLVVFLAEVAASLVVLCLFPKILFQDKGNSTKSANNSYAVIITSTSSYYIFYIYVGVADTLLALGLFRGLPLVHTLITVSKTLHHKMLQSVLQAPMSTLNTLKTGGILNRFSKDIAVLDDLLPLTIFDFVQLLLIVIGAVVVVSVLQPYIFLATVPVIAAFILLRAYFLHTSQQLKQLESEGRSPIFTHLVTSLKGLWTLRAFGRQPYFETLFHKALNLHTANWFLYLSTLRWFQMRIEMIFVIFFIAVTFISILTTGEGEGRVGIILTLAMNIMGTLQWAVNSSIDVDSLMRSVSRVFKFIDMPTEDGKPNNSFRPSKDSQLSKVMIIENQHVKKDDIWPSGGQMTVKDLTAKYIDGGNAILENISFSISPGQRVGLLGRTGSGKSTLLLAFLRLLNTKGEIQIDGVSWDSITLQQWRKAFGVIPQKVFIFSGTFRKNLDPYGQWSDQEIWKVADEVGLRSVIEQFPGKLDFVLVDGGCVLSHGHKQLMCLARSVLSKAKILLLDEPSAHLDPITYQIIRRTLKQAFADCTVILSEHRIEAMLECQRFLVIEENKVRQYDSIQRMLSEKSLFRQAISPADRLKLLPQRNSSRQKSRSNIAALKEETEEEVQETKL.

The Cytoplasmic segment spans residues 1–77; the sequence is MQRSPLEKAS…KLINALRRCF (77 aa). A helical membrane pass occupies residues 78–98; the sequence is FWRFMFYGIILYLGEVTKAVQ. In terms of domain architecture, ABC transmembrane type-1 1 spans 81–365; it reads FMFYGIILYL…WAVQTWYDSL (285 aa). Over 99-122 the chain is Extracellular; that stretch reads PLLLGRIIASYDPDNKVERSIAIY. The helical transmembrane segment at 123-146 threads the bilayer; sequence LGIGLCLLFIVRTLLLHPAIFGLH. At 147–195 the chain is on the cytoplasmic side; it reads HIGMQMRIAMFSLIYKKTLKLSSRVLDKISIGQLVSLLSNNLNKFDEGL. The chain crosses the membrane as a helical span at residues 196–216; the sequence is ALAHFVWIAPLQVTLLMGLLW. Topologically, residues 217 to 222 are extracellular; it reads ELLQAF. The helical transmembrane segment at 223 to 243 threads the bilayer; it reads TFCGLAFLVVLAFLQAGLGKM. Residues 244–298 are Cytoplasmic-facing; that stretch reads MMKYRDQRAGKINERLVITSEIIENIQSVKAYCWEEAMEKIIENLRQTELKLTRK. Residues 299-319 form a helical membrane-spanning segment; sequence AAYVRYLNSSAFFFSGFFVVF. At 320-339 the chain is on the extracellular side; sequence LSVLPYALLKGIILRKIFTT. Residues 340 to 358 form a helical membrane-spanning segment; that stretch reads ISFCIVLRMAVTRQFPWAV. The Cytoplasmic segment spans residues 359–858; it reads QTWYDSLGAI…YLRYITVHKS (500 aa). Residues W401, 457 to 464, and Q492 contribute to the ATP site; that span reads GSTGAGKT. The 223-residue stretch at 423–645 folds into the ABC transporter 1 domain; it reads NGDNNLFFSN…RPDFSSKLMG (223 aa). C523 is lipidated: S-palmitoyl cysteine. 2 positions are modified to phosphoserine: S548 and S659. Residues 653 to 831 form a disordered R region region; it reads TAERRNSIIT…EEINEEDLRD (179 aa). Phosphoserine; by PKA is present on S669. At S685 the chain carries Phosphoserine. K687 is covalently cross-linked (Glycyl lysine isopeptide (Lys-Gly) (interchain with G-Cter in ubiquitin)). Phosphoserine occurs at positions 699 and 711. Phosphothreonine is present on T716. A phosphoserine mark is found at S736, S767, S790, S795, and S813. Residues 859–879 form a helical membrane-spanning segment; sequence LMFVLIWCLVVFLAEVAASLV. Positions 859 to 1155 constitute an ABC transmembrane type-1 2 domain; it reads LMFVLIWCLV…AVNSSIDVDS (297 aa). Over 880-918 the chain is Extracellular; that stretch reads VLCLFPKILFQDKGNSTKSANNSYAVIITSTSSYYIFYI. N-linked (GlcNAc...) asparagine glycans are attached at residues N894 and N900. A discontinuously helical transmembrane segment spans residues 919 to 939; it reads YVGVADTLLALGLFRGLPLVH. Topologically, residues 940 to 990 are cytoplasmic; sequence TLITVSKTLHHKMLQSVLQAPMSTLNTLKTGGILNRFSKDIAVLDDLLPLT. Residues 991–1011 form a helical membrane-spanning segment; sequence IFDFVQLLLIVIGAVVVVSVL. The Extracellular portion of the chain corresponds to 1012 to 1013; sequence QP. The chain crosses the membrane as a helical span at residues 1014–1034; it reads YIFLATVPVIAAFILLRAYFL. At 1035-1095 the chain is on the cytoplasmic side; the sequence is HTSQQLKQLE…TANWFLYLST (61 aa). Residues 1096–1116 traverse the membrane as a helical segment; it reads LRWFQMRIEMIFVIFFIAVTF. Residues 1117–1130 are Extracellular-facing; it reads ISILTTGEGEGRVG. The chain crosses the membrane as a helical span at residues 1131–1151; sequence IILTLAMNIMGTLQWAVNSSI. The Cytoplasmic segment spans residues 1152-1481; the sequence is DVDSLMRSVS…TEEEVQETKL (330 aa). Positions 1211 to 1444 constitute an ABC transporter 2 domain; the sequence is MTVKDLTAKY…KSLFRQAISP (234 aa). ATP contacts are provided by residues Y1220 and 1245 to 1252; that span reads GRTGSGKS. The segment at 1387–1481 is interaction with GORASP2; that stretch reads RTLKQAFADC…TEEEVQETKL (95 aa). C1396 carries S-palmitoyl cysteine lipidation. Residues 1452–1481 are disordered; that stretch reads PQRNSSRQKSRSNIAALKEETEEEVQETKL. Residues 1453–1464 show a composition bias toward low complexity; that stretch reads QRNSSRQKSRSN. S1457 bears the Phosphoserine mark. Residues 1471 to 1481 are compositionally biased toward acidic residues; it reads ETEEEVQETKL. The PDZ-binding motif lies at 1479-1481; sequence TKL.

Belongs to the ABC transporter superfamily. ABCC family. CFTR transporter (TC 3.A.1.202) subfamily. In terms of assembly, monomer; does not require oligomerization for channel activity. May form oligomers in the membrane. Interacts with SLC26A3, SLC26A6 and NHERF1. Interacts with SHANK2. Interacts with MYO6. Interacts (via C-terminus) with GOPC (via PDZ domain); this promotes CFTR internalization and thereby decreases channel activity. Interacts with SLC4A7 through NHERF1. Found in a complex with MYO5B and RAB11A. Interacts with ANO1. Interacts with SLC26A8. Interacts with AHCYL1; the interaction increases CFTR activity. Interacts with CSE1L. The core-glycosylated form interacts with GORASP2 (via PDZ GRASP-type 1 domain) in respone to ER stress. Interacts with MARCHF2; the interaction leads to CFTR ubiqtuitination and degradation. Interacts with ADGRG2. N-glycosylated. Post-translationally, phosphorylated; cAMP treatment promotes phosphorylation and activates the channel. Dephosphorylation decreases the ATPase activity (in vitro). Phosphorylation at PKA sites activates the channel. Phosphorylation at PKC sites enhances the response to phosphorylation by PKA. Phosphorylated by AMPK; this inhibits channel activity. In terms of processing, ubiquitinated, leading to its degradation in the lysosome. Deubiquitination by USP10 in early endosomes enhances its endocytic recycling to the cell membrane. Ubiquitinated by RNF185 during ER stress. Ubiquitinated by MARCHF2.

It localises to the apical cell membrane. Its subcellular location is the early endosome membrane. The protein resides in the cell membrane. The protein localises to the recycling endosome membrane. It is found in the endoplasmic reticulum membrane. It localises to the nucleus. The catalysed reaction is ATP + H2O + closed Cl(-) channel = ADP + phosphate + open Cl(-) channel.. It carries out the reaction chloride(in) = chloride(out). The enzyme catalyses hydrogencarbonate(in) = hydrogencarbonate(out). It catalyses the reaction ATP + H2O = ADP + phosphate + H(+). In terms of biological role, epithelial ion channel that plays an important role in the regulation of epithelial ion and water transport and fluid homeostasis. Mediates the transport of chloride ions across the cell membrane. Possesses an intrinsic ATPase activity and utilizes ATP to gate its channel; the passive flow of anions through the channel is gated by cycles of ATP binding and hydrolysis by the ATP-binding domains. The ion channel is also permeable to HCO(3)(-); selectivity depends on the extracellular chloride concentration. Exerts its function also by modulating the activity of other ion channels and transporters. Contributes to the regulation of the pH and the ion content of the epithelial fluid layer. Modulates the activity of the epithelial sodium channel (ENaC) complex, in part by regulating the cell surface expression of the ENaC complex. May regulate bicarbonate secretion and salvage in epithelial cells by regulating the transporter SLC4A7. Can inhibit the chloride channel activity of ANO1. Plays a role in the chloride and bicarbonate homeostasis during sperm epididymal maturation and capacitation. This is Cystic fibrosis transmembrane conductance regulator from Muntiacus muntjak (Barking deer).